Here is a 327-residue protein sequence, read N- to C-terminus: Phenylalanine--tRNA ligase alpha subunit (327 aa).

Glu-252 contacts Mg(2+).

The protein belongs to the class-II aminoacyl-tRNA synthetase family. Phe-tRNA synthetase alpha subunit type 1 subfamily. Tetramer of two alpha and two beta subunits. Mg(2+) serves as cofactor.

The protein localises to the cytoplasm. It carries out the reaction tRNA(Phe) + L-phenylalanine + ATP = L-phenylalanyl-tRNA(Phe) + AMP + diphosphate + H(+). The chain is Phenylalanine--tRNA ligase alpha subunit from Shigella dysenteriae serotype 1 (strain Sd197).